The sequence spans 91 residues: Small ribosomal subunit protein uS19 (91 aa).

The protein belongs to the universal ribosomal protein uS19 family.

In terms of biological role, protein S19 forms a complex with S13 that binds strongly to the 16S ribosomal RNA. The polypeptide is Small ribosomal subunit protein uS19 (Prochlorococcus marinus subsp. pastoris (strain CCMP1986 / NIES-2087 / MED4)).